The primary structure comprises 845 residues: Tyrosine-protein phosphatase corkscrew (845 aa).

SH2 domains lie at 6–101 and 111–205; these read WFHP…KQPL and WFHG…RQPF. The Tyrosine-protein phosphatase domain occupies 227-645; it reads FWEEFESLQQ…KFVYYAVQHY (419 aa). A PTPase insert (Cys/Ser-rich) region spans residues 289 to 444; it reads IRLPTDGDLY…REREREMFKT (156 aa). The segment at 362 to 402 is disordered; that stretch reads SKHKRSESSASSSPSSGSGSGPGSSGTSGVSSVNGPGTPTN. Low complexity-rich tracts occupy residues 369–378 and 388–400; these read SSASSSPSSG and TSGV…PGTP. Phosphoserine is present on Ser-419. Substrate contacts are provided by residues Asp-545, 583-589, and Gln-630; that span reads CSAGIGR. The active-site Phosphocysteine intermediate is Cys-583. Positions 793 to 824 are disordered; sequence DSLKQQQQREEQAPAGAGKMQQPAPPLRPRPG.

Belongs to the protein-tyrosine phosphatase family. Non-receptor class subfamily. Interacts with drpr isoform A. Expressed uniformly throughout all tissues during embryogenesis.

The protein resides in the cytoplasm. It carries out the reaction O-phospho-L-tyrosyl-[protein] + H2O = L-tyrosyl-[protein] + phosphate. Functionally, required in all receptor tyrosine kinase signaling pathways. Functions downstream of the receptor tyrosine kinase torso, acting in concert with D-Raf via tailless. Also functions downstream of Egfr (epidermal growth factor receptor) and btl (fibroblast growth factor receptor). The SH2 domain suggests that csw effects its role by mediating heteromeric protein interactions. Maternally required for normal determination of cell fates at the termini of the embryo. Required for cell fate specification of the ventral ectoderm, in the developing embryonic CNS and for embryonic tracheal cell migration. Functions during imaginal development for proper formation of adult structures such as eyes, aristae, L5 wing vein and the tarsal claw. Dephosphorylates drpr isoform A which is required for the inhibition by drpr isoform A of glial cell engulfment of axonal debris produced following axonal injury. The polypeptide is Tyrosine-protein phosphatase corkscrew (csw) (Drosophila melanogaster (Fruit fly)).